The chain runs to 520 residues: 5'-nucleotidase domain-containing protein 2 (520 aa).

The active-site Nucleophile is D73. Mg(2+) is bound by residues D73, D75, and D358. D75 acts as the Proton donor in catalysis.

Belongs to the 5'(3')-deoxyribonucleotidase family. As to quaternary structure, interacts with tyrosine 3-monooxygenase TH; the interaction results in reduced phosphorylation and decreased catalytic activity of TH.

Its subcellular location is the cytoplasm. In terms of biological role, promotes dephosphorylation of tyrosine 3-monooxygenase TH which decreases TH catalytic activity and leads to reduced synthesis of catecholamines including dopamine, noradrenaline and adrenaline. The exact mechanism of activity is unknown but may act as a phosphatase or promote the activity of phosphatases or may inhibit phosphorylation by acting as a barrier to interfere with protein kinase access. This is 5'-nucleotidase domain-containing protein 2 (NT5DC2) from Homo sapiens (Human).